The primary structure comprises 1685 residues: Myomesin-1 (1685 aa).

Residues 33 to 80 (KKRSAVYTQGSTAYSSRSSAAHRRESEAFRRASASSSQQQASQHALSS) form a disordered region. Composition is skewed to low complexity over residues 41 to 51 (QGSTAYSSRSS) and 63 to 80 (RASASSSQQQASQHALSS). Ser113 carries the phosphoserine modification. A disordered region spans residues 177–244 (GITTSKQSTA…TSEKKSRKVV (68 aa)). The span at 179-220 (TTSKQSTASKQTTASKQSTASKQSTASKQSTASRQSTASRQS) shows a compositional bias: low complexity. Repeat copies occupy residues 182-187 (KQSTAS), 188-193 (KQTTAS), 194-199 (KQSTAS), 200-205 (KQSTAS), 206-211 (KQSTAS), and 212-217 (RQSTAS). A 6 X 6 AA tandem repeats region spans residues 182–217 (KQSTASKQTTASKQSTASKQSTASKQSTASRQSTAS). Residues 221 to 233 (VVSKQATSALQQE) show a composition bias toward polar residues. Ig-like C2-type domains lie at 277 to 368 (PEFI…ASVV) and 396 to 498 (PYGY…AYVF). Fibronectin type-III domains are found at residues 512–607 (APLD…ALDP), 640–734 (PPTD…VVGD), and 741–834 (APGK…VKAA). Residues 840 to 938 (SPDVCPALSD…TDRAPPSPPC (99 aa)) are disordered. Low complexity predominate over residues 874 to 888 (LLGSKPNKPSLPSSS). Phosphoserine is present on residues Ser883 and Ser887. Positions 889–902 (QNLGQTEVSKVSET) are enriched in polar residues. Positions 920-931 (SKSDPLKKKTDR) are enriched in basic and acidic residues. 2 Fibronectin type-III domains span residues 933–1034 (PPSP…CEEW) and 1041–1140 (PPHS…TRPG). Ser1054 bears the Phosphoserine mark. Ig-like C2-type domains lie at 1132–1230 (PVVA…EELK), 1358–1444 (PHFV…LKLV), and 1573–1662 (RVLG…FTVS). The cysteines at positions 1160 and 1210 are disulfide-linked.

As to quaternary structure, homodimer. Interacts with TTN/titin. Interacts with PNKD.

The protein localises to the cytoplasm. It localises to the myofibril. The protein resides in the sarcomere. Its subcellular location is the m line. In terms of biological role, major component of the vertebrate myofibrillar M band. Binds myosin, titin, and light meromyosin. This binding is dose dependent. The protein is Myomesin-1 (MYOM1) of Homo sapiens (Human).